The chain runs to 178 residues: V-type proton ATPase subunit c''2 (178 aa).

Over 1 to 24 the chain is Lumenal; it reads MSGVAIHASSWGAALVRISPYTFS. A helical membrane pass occupies residues 25-45; sequence AIGIAISIGVSVLGAAWGIYI. The Cytoplasmic segment spans residues 46 to 64; the sequence is TGSSLIGAAIEAPRITSKN. Residues 65-85 traverse the membrane as a helical segment; the sequence is LISVIFCEAVAIYGVIVAIIL. Topologically, residues 86-108 are lumenal; the sequence is QTKLESVPSSKMYDAESLRAGYA. The chain crosses the membrane as a helical span at residues 109–129; it reads IFASGIIVGFANLVCGLCVGI. At 130–147 the chain is on the cytoplasmic side; sequence IGSSCALSDAQNSTLFVK. The chain crosses the membrane as a helical span at residues 148–168; it reads ILVIEIFGSALGLFGVIVGII. At 169-178 the chain is on the lumenal side; the sequence is MSAQATWPTK.

Belongs to the V-ATPase proteolipid subunit family. In terms of assembly, V-ATPase is a heteromultimeric enzyme composed of a peripheral catalytic V1 complex (components A to H) attached to an integral membrane V0 proton pore complex (components: a, c, c'', d and e). The proteolipid components c and c'' are present as a hexameric ring that forms the proton-conducting pore. Interacts with APD2.

It localises to the endoplasmic reticulum membrane. The protein localises to the golgi apparatus membrane. Proton-conducting pore forming subunit of the membrane integral V0 complex of vacuolar ATPase. V-ATPase is responsible for acidifying a variety of intracellular compartments in eukaryotic cells. The chain is V-type proton ATPase subunit c''2 (VHA-c''2) from Arabidopsis thaliana (Mouse-ear cress).